The following is a 467-amino-acid chain: Protein indeterminate-domain 6, chloroplastic (467 aa).

Residues 1-20 constitute a chloroplast transit peptide; sequence MSSSYNTIALSSTPTFLLSS. Positions 38–65 are disordered; it reads TMVQQQPTSSVAPPPKKRRNQPGNPNPD. The segment covering 39 to 48 has biased composition (polar residues); sequence MVQQQPTSSV. Ser-72 is modified (phosphoserine). C2H2-type zinc fingers lie at residues 82–104 and 123–153; these read FLCE…RRGH and YLCP…YRKH. Residues 158–181 form a C2H2-type 2; degenerate zinc finger; that stretch reads WKCDKCSKRYAVQSDWKAHSKTCG. Cys-160, Cys-163, His-176, Cys-180, Cys-187, Cys-189, His-202, and Cys-206 together coordinate Zn(2+). The segment at 185 to 208 adopts a CCHC-type 2; atypical zinc-finger fold; that stretch reads YRCDCGTIFSRRDSYITHRAFCDA. The tract at residues 195-207 is SHR-binding; that stretch reads RRDSYITHRAFCD. The disordered stretch occupies residues 440–467; the sequence is NGRGGRSGGPPLDAEMKFSHPNHPYGKA.

Its subcellular location is the plastid. It is found in the chloroplast. Probable transcription factor. The chain is Protein indeterminate-domain 6, chloroplastic from Arabidopsis thaliana (Mouse-ear cress).